We begin with the raw amino-acid sequence, 426 residues long: 3-phosphoshikimate 1-carboxyvinyltransferase (426 aa).

Lysine 22, serine 23, and arginine 27 together coordinate 3-phosphoshikimate. Residue lysine 22 participates in phosphoenolpyruvate binding. Residues glycine 96 and arginine 124 each contribute to the phosphoenolpyruvate site. 3-phosphoshikimate-binding residues include serine 170, serine 171, glutamine 172, serine 198, aspartate 314, asparagine 337, and lysine 341. Glutamine 172 serves as a coordination point for phosphoenolpyruvate. The Proton acceptor role is filled by aspartate 314. The phosphoenolpyruvate site is built by arginine 345, arginine 387, and lysine 412.

The protein belongs to the EPSP synthase family. As to quaternary structure, monomer.

It localises to the cytoplasm. The catalysed reaction is 3-phosphoshikimate + phosphoenolpyruvate = 5-O-(1-carboxyvinyl)-3-phosphoshikimate + phosphate. It functions in the pathway metabolic intermediate biosynthesis; chorismate biosynthesis; chorismate from D-erythrose 4-phosphate and phosphoenolpyruvate: step 6/7. Its function is as follows. Catalyzes the transfer of the enolpyruvyl moiety of phosphoenolpyruvate (PEP) to the 5-hydroxyl of shikimate-3-phosphate (S3P) to produce enolpyruvyl shikimate-3-phosphate and inorganic phosphate. The sequence is that of 3-phosphoshikimate 1-carboxyvinyltransferase from Photobacterium damsela subsp. piscicida (Pasteurella piscicida).